A 393-amino-acid chain; its full sequence is Major tail sheath protein (393 aa).

It belongs to the myoviridae tail sheath protein family.

It localises to the virion. Functionally, forms the virus contractile tail sheath. This Serratia phage KSP20 (Serratia marcescens bacteriophage KSP20) protein is Major tail sheath protein.